We begin with the raw amino-acid sequence, 138 residues long: Transcription antitermination protein NusB (138 aa).

This sequence belongs to the NusB family.

In terms of biological role, involved in transcription antitermination. Required for transcription of ribosomal RNA (rRNA) genes. Binds specifically to the boxA antiterminator sequence of the ribosomal RNA (rrn) operons. The protein is Transcription antitermination protein NusB of Serratia proteamaculans (strain 568).